The primary structure comprises 95 residues: UPF0235 protein A2cp1_1215 (95 aa).

The protein belongs to the UPF0235 family.

The sequence is that of UPF0235 protein A2cp1_1215 from Anaeromyxobacter dehalogenans (strain 2CP-1 / ATCC BAA-258).